We begin with the raw amino-acid sequence, 538 residues long: indole-2-monooxygenase (538 aa).

A helical membrane pass occupies residues 22–42; that stretch reads ALLLAIPFSLLLLPLLLRYLA. Residue cysteine 481 coordinates heme.

This sequence belongs to the cytochrome P450 family. Heme is required as a cofactor.

The protein localises to the membrane. The catalysed reaction is indole + reduced [NADPH--hemoprotein reductase] + O2 = indolin-2-one + oxidized [NADPH--hemoprotein reductase] + H2O + H(+). Its pathway is secondary metabolite biosynthesis; 2,4-dihydroxy-1,4-benzoxazin-3-one biosynthesis; 2,4-dihydroxy-1,4-benzoxazin-3-one from indoleglycerol phosphate: step 2/5. Functionally, catalyzes the conversion of indole to indolin-2-one. The chain is indole-2-monooxygenase (CYP71C4) from Zea mays (Maize).